The following is a 113-amino-acid chain: Phosphorelay protein LuxU (113 aa).

Residues G18 to H113 form the HPt domain. Residue H57 is modified to Phosphohistidine.

As to quaternary structure, monomer.

In terms of biological role, phosphorelay protein which receives sensory signals from a sensory kinase and transmit them to LuxO. At low cell density, a phosphoryl group is transferred from the sensory kinase, probably on His-57 and this phosphoryl group is further transferred to LuxO. The sequence is that of Phosphorelay protein LuxU (luxU) from Vibrio cholerae serotype O1 (strain ATCC 39315 / El Tor Inaba N16961).